Reading from the N-terminus, the 488-residue chain is Ribulose bisphosphate carboxylase large chain (488 aa).

2 residues coordinate substrate: Asn127 and Thr177. Residue Lys179 is the Proton acceptor of the active site. Lys181 serves as a coordination point for substrate. 3 residues coordinate Mg(2+): Lys205, Asp207, and Glu208. An N6-carboxylysine modification is found at Lys205. Residue His297 is the Proton acceptor of the active site. The substrate site is built by Arg298, His330, and Ser382.

The protein belongs to the RuBisCO large chain family. Type I subfamily. As to quaternary structure, heterohexadecamer of 8 large chains and 8 small chains. Requires Mg(2+) as cofactor.

Its subcellular location is the plastid. It is found in the chloroplast. It carries out the reaction 2 (2R)-3-phosphoglycerate + 2 H(+) = D-ribulose 1,5-bisphosphate + CO2 + H2O. The enzyme catalyses D-ribulose 1,5-bisphosphate + O2 = 2-phosphoglycolate + (2R)-3-phosphoglycerate + 2 H(+). Functionally, ruBisCO catalyzes two reactions: the carboxylation of D-ribulose 1,5-bisphosphate, the primary event in carbon dioxide fixation, as well as the oxidative fragmentation of the pentose substrate in the photorespiration process. Both reactions occur simultaneously and in competition at the same active site. This chain is Ribulose bisphosphate carboxylase large chain, found in Chrysotila carterae (Marine alga).